The primary structure comprises 244 residues: Small ribosomal subunit protein eS4 (244 aa).

An S4 RNA-binding domain is found at 43-106 (LPLLLIVRDT…NENYLVLFDE (64 aa)).

Belongs to the eukaryotic ribosomal protein eS4 family.

This chain is Small ribosomal subunit protein eS4 (rps4e), found in Methanococcus vannielii.